The chain runs to 483 residues: Probable serine incorporator (483 aa).

11 helical membrane-spanning segments follow: residues 43-63, 109-129, 146-166, 169-189, 218-238, 249-269, 274-294, 295-315, 338-358, 414-434, and 457-477; these read STRITYAILFFLSSIAAWIML, IMFSVCLFHLFLSLCTIGVSS, LILLVGAMVGSFFISNSFFIG, WSWIGLVGAVLFMIVQFILLV, ISATVMLMAFVITLTVLMFHF, FFIGFNLALALLVTLTSMLPS, LPSSGILQSSVVAAYATYLVW, SAVSGVPSTCHPLIAVAPLFL, AGTNTAAIVIGALLTFISVAY, YSWSFFHLTFAVAALYLMMVL, and VVSSWVIFLLYGWTMMAPVCL.

Belongs to the TDE1 family.

It localises to the endoplasmic reticulum membrane. Functionally, enhances the incorporation of serine into phosphatidylserine and sphingolipids. The chain is Probable serine incorporator (serinc) from Monosiga brevicollis (Choanoflagellate).